Here is a 94-residue protein sequence, read N- to C-terminus: Small ribosomal subunit protein uS19 (94 aa).

This sequence belongs to the universal ribosomal protein uS19 family.

Functionally, protein S19 forms a complex with S13 that binds strongly to the 16S ribosomal RNA. The polypeptide is Small ribosomal subunit protein uS19 (Caldicellulosiruptor saccharolyticus (strain ATCC 43494 / DSM 8903 / Tp8T 6331)).